Here is a 417-residue protein sequence, read N- to C-terminus: Snake venom metalloproteinase acutolysin-C (417 aa).

The signal sequence occupies residues 1–20 (MIQVLLVTICLAALPYQGSS). A propeptide spans 21 to 189 (IMLESGKVND…KRPSRLNLTP (169 aa)) (activation peptide). Residues 197–392 (TSVNLQLIVD…KKPKCIHKKS (196 aa)) enclose the Peptidase M12B domain. 3 disulfide bridges follow: cysteine 308–cysteine 387, cysteine 349–cysteine 371, and cysteine 351–cysteine 354. Position 333 (histidine 333) interacts with Zn(2+). The active site involves glutamate 334. Positions 337 and 343 each coordinate Zn(2+). A propeptide spanning residues 393-417 (LKTDTVSTSVSGNEPLDDNVDGFHA) is cleaved from the precursor. Positions 398 to 417 (VSTSVSGNEPLDDNVDGFHA) are disordered. Acidic residues predominate over residues 407–417 (PLDDNVDGFHA).

Belongs to the venom metalloproteinase (M12B) family. P-I subfamily. In terms of assembly, monomer. Zn(2+) serves as cofactor. As to expression, expressed by the venom gland.

The protein localises to the secreted. Its function is as follows. This protein is an alkaline zinc metalloprotease from snake venom that possesses weak hemorrhagic activity. In Deinagkistrodon acutus (Hundred-pace snake), this protein is Snake venom metalloproteinase acutolysin-C.